Consider the following 315-residue polypeptide: Porphobilinogen deaminase (315 aa).

Cysteine 251 carries the post-translational modification S-(dipyrrolylmethanemethyl)cysteine.

This sequence belongs to the HMBS family. Monomer. Dipyrromethane serves as cofactor.

It catalyses the reaction 4 porphobilinogen + H2O = hydroxymethylbilane + 4 NH4(+). It functions in the pathway porphyrin-containing compound metabolism; protoporphyrin-IX biosynthesis; coproporphyrinogen-III from 5-aminolevulinate: step 2/4. In terms of biological role, tetrapolymerization of the monopyrrole PBG into the hydroxymethylbilane pre-uroporphyrinogen in several discrete steps. The chain is Porphobilinogen deaminase from Sphingopyxis alaskensis (strain DSM 13593 / LMG 18877 / RB2256) (Sphingomonas alaskensis).